The sequence spans 298 residues: MNHIISIHDLDRDQIDRLLARAGEVTAEFAGKEPLKGKILGLLFFEPSTRTRMSFESAMLRLGGSCMNLGGVEVSSMAKGETLADTIRVVSGYADAIVLRHPKVGAARLASEFSEIPILNGGDGAGQHPSQTLIDLYTIRQSMSLDNIHIGLIGDLMYGRTTHSLAYALTHYNARIHTIAPKGLGLPDSIHDNLEERGATVIEHDSIEEVISDLDVLYVTRLQRERFPDPAKFYDVSSSYRITPSLLTDVKEHLAILHPLPRVDEIDPSVDNLPYARYFEQARNGVPVRMAMLTEVMV.

Carbamoyl phosphate is bound by residues Arg50 and Thr51. Lys79 is a binding site for L-aspartate. Positions 100, 128, and 131 each coordinate carbamoyl phosphate. Residues Arg160 and Arg221 each coordinate L-aspartate. Residues Leu260 and Pro261 each contribute to the carbamoyl phosphate site.

It belongs to the aspartate/ornithine carbamoyltransferase superfamily. ATCase family. In terms of assembly, heterooligomer of catalytic and regulatory chains.

It carries out the reaction carbamoyl phosphate + L-aspartate = N-carbamoyl-L-aspartate + phosphate + H(+). Its pathway is pyrimidine metabolism; UMP biosynthesis via de novo pathway; (S)-dihydroorotate from bicarbonate: step 2/3. Functionally, catalyzes the condensation of carbamoyl phosphate and aspartate to form carbamoyl aspartate and inorganic phosphate, the committed step in the de novo pyrimidine nucleotide biosynthesis pathway. The sequence is that of Aspartate carbamoyltransferase catalytic subunit from Methanospirillum hungatei JF-1 (strain ATCC 27890 / DSM 864 / NBRC 100397 / JF-1).